The chain runs to 580 residues: Arginine--tRNA ligase (580 aa).

The 'HIGH' region motif lies at 131–141; sequence ANPTGPMHVGH.

It belongs to the class-I aminoacyl-tRNA synthetase family. Monomer.

The protein resides in the cytoplasm. It catalyses the reaction tRNA(Arg) + L-arginine + ATP = L-arginyl-tRNA(Arg) + AMP + diphosphate. The chain is Arginine--tRNA ligase from Cereibacter sphaeroides (strain ATCC 17029 / ATH 2.4.9) (Rhodobacter sphaeroides).